The sequence spans 259 residues: Steroidogenic acute regulatory-like protein 1 (259 aa).

The first 20 residues, 1 to 20 (MTLLPFTCLILLYSLGSVMS), serve as a signal peptide directing secretion. The region spanning 43–254 (YATALKTCGE…NRRHFQNLKA (212 aa)) is the START domain.

The sequence is that of Steroidogenic acute regulatory-like protein 1 (strl-1) from Caenorhabditis elegans.